The primary structure comprises 129 residues: UPF0212 protein MA_1372 (129 aa).

Belongs to the UPF0212 family.

This is UPF0212 protein MA_1372 from Methanosarcina acetivorans (strain ATCC 35395 / DSM 2834 / JCM 12185 / C2A).